The following is a 205-amino-acid chain: Probable anaerobic dimethyl sulfoxide reductase chain YnfG (205 aa).

4Fe-4S ferredoxin-type domains follow at residues 5-33, 59-89, and 90-119; these read YGFF…LGPE, FAYY…KRED, and GFVV…YNAE. Positions 14, 17, 20, 24, 67, 70, 75, 79, 99, 102, 105, 109, 126, 129, 141, and 145 each coordinate [4Fe-4S] cluster. The tract at residues 183–205 is disordered; the sequence is IKPNANSRPTGDTTGYLANPEEV. The segment covering 186–195 has biased composition (polar residues); that stretch reads NANSRPTGDT.

The complex consists of three subunits: YnfF, the reductase; YnfG, an electron transfer protein, and YnfH, a membrane anchor protein. The cofactor is [4Fe-4S] cluster.

In terms of biological role, electron transfer subunit of the terminal reductase during anaerobic growth on various sulfoxide and N-oxide compounds. This chain is Probable anaerobic dimethyl sulfoxide reductase chain YnfG (ynfG), found in Escherichia coli O6:H1 (strain CFT073 / ATCC 700928 / UPEC).